Here is a 146-residue protein sequence, read N- to C-terminus: Large ribosomal subunit protein uL15 (146 aa).

Positions 1–13 are enriched in basic and acidic residues; the sequence is MKLHELKAAEGSR. Residues 1–56 form a disordered region; sequence MKLHELKAAEGSRRVRNRVGRGAGSGNGKTSGRGQKGQKARSGGGVRPGFEGGQLP. Gly residues-rich tracts occupy residues 21–35 and 42–52; these read RGAG…GRGQ and SGGGVRPGFEG.

It belongs to the universal ribosomal protein uL15 family. Part of the 50S ribosomal subunit.

Its function is as follows. Binds to the 23S rRNA. The sequence is that of Large ribosomal subunit protein uL15 from Staphylococcus haemolyticus (strain JCSC1435).